Here is an 898-residue protein sequence, read N- to C-terminus: Phosphoenolpyruvate carboxylase (898 aa).

Active-site residues include His138 and Lys561.

Belongs to the PEPCase type 1 family. Requires Mg(2+) as cofactor.

The enzyme catalyses oxaloacetate + phosphate = phosphoenolpyruvate + hydrogencarbonate. Functionally, forms oxaloacetate, a four-carbon dicarboxylic acid source for the tricarboxylic acid cycle. The chain is Phosphoenolpyruvate carboxylase from Streptococcus pneumoniae serotype 2 (strain D39 / NCTC 7466).